Consider the following 431-residue polypeptide: Enolase (431 aa).

Q166 lines the (2R)-2-phosphoglycerate pocket. The Proton donor role is filled by E208. 3 residues coordinate Mg(2+): D245, E288, and D315. Positions 340, 369, 370, and 391 each coordinate (2R)-2-phosphoglycerate. Residue K340 is the Proton acceptor of the active site.

This sequence belongs to the enolase family. Mg(2+) serves as cofactor.

The protein localises to the cytoplasm. It is found in the secreted. Its subcellular location is the cell surface. The enzyme catalyses (2R)-2-phosphoglycerate = phosphoenolpyruvate + H2O. It participates in carbohydrate degradation; glycolysis; pyruvate from D-glyceraldehyde 3-phosphate: step 4/5. Catalyzes the reversible conversion of 2-phosphoglycerate (2-PG) into phosphoenolpyruvate (PEP). It is essential for the degradation of carbohydrates via glycolysis. This Clostridium perfringens (strain 13 / Type A) protein is Enolase.